We begin with the raw amino-acid sequence, 456 residues long: Adenylosuccinate lyase (456 aa).

Residues 15–16 and 90–92 contribute to the N(6)-(1,2-dicarboxyethyl)-AMP site; these read RY and NHD. Position 94 is an N6-acetyllysine (Lys94). N(6)-(1,2-dicarboxyethyl)-AMP is bound at residue 122–123; sequence TS. His171 (proton donor/acceptor) is an active-site residue. Gln247 contacts N(6)-(1,2-dicarboxyethyl)-AMP. Catalysis depends on Ser295, which acts as the Proton donor/acceptor. N(6)-(1,2-dicarboxyethyl)-AMP-binding positions include Ser296, 301-303, Asn309, Arg335, and 340-344; these read KVN and STVLR. Lys366 carries the post-translational modification N6-acetyllysine.

Belongs to the lyase 1 family. Adenylosuccinate lyase subfamily. In terms of assembly, homotetramer. Residues from neighboring subunits contribute catalytic and substrate-binding residues to each active site.

It carries out the reaction N(6)-(1,2-dicarboxyethyl)-AMP = fumarate + AMP. The enzyme catalyses (2S)-2-[5-amino-1-(5-phospho-beta-D-ribosyl)imidazole-4-carboxamido]succinate = 5-amino-1-(5-phospho-beta-D-ribosyl)imidazole-4-carboxamide + fumarate. It functions in the pathway purine metabolism; AMP biosynthesis via de novo pathway; AMP from IMP: step 2/2. Its pathway is purine metabolism; IMP biosynthesis via de novo pathway; 5-amino-1-(5-phospho-D-ribosyl)imidazole-4-carboxamide from 5-amino-1-(5-phospho-D-ribosyl)imidazole-4-carboxylate: step 2/2. Its function is as follows. Catalyzes two reactions in de novo purine nucleotide biosynthesis. Catalyzes the breakdown of 5-aminoimidazole- (N-succinylocarboxamide) ribotide (SAICAR or 2-[5-amino-1-(5-phospho-beta-D-ribosyl)imidazole-4-carboxamido]succinate) to 5-aminoimidazole-4-carboxamide ribotide (AICAR or 5-amino-1-(5-phospho-beta-D-ribosyl)imidazole-4-carboxamide) and fumarate, and of adenylosuccinate (ADS or N(6)-(1,2-dicarboxyethyl)-AMP) to adenosine monophosphate (AMP) and fumarate. The polypeptide is Adenylosuccinate lyase (purB) (Escherichia coli O6:H1 (strain CFT073 / ATCC 700928 / UPEC)).